The sequence spans 458 residues: Argininosuccinate lyase (458 aa).

The protein belongs to the lyase 1 family. Argininosuccinate lyase subfamily.

Its subcellular location is the cytoplasm. It catalyses the reaction 2-(N(omega)-L-arginino)succinate = fumarate + L-arginine. The protein operates within amino-acid biosynthesis; L-arginine biosynthesis; L-arginine from L-ornithine and carbamoyl phosphate: step 3/3. In Salmonella typhi, this protein is Argininosuccinate lyase.